Here is a 207-residue protein sequence, read N- to C-terminus: Small ribosomal subunit protein uS4c (207 aa).

In terms of domain architecture, S4 RNA-binding spans 92–156 (MRLDNILFRL…YQSIITKRIE (65 aa)).

This sequence belongs to the universal ribosomal protein uS4 family. Part of the 30S ribosomal subunit. Contacts protein S5. The interaction surface between S4 and S5 is involved in control of translational fidelity.

It localises to the plastid. The protein resides in the chloroplast. Functionally, one of the primary rRNA binding proteins, it binds directly to 16S rRNA where it nucleates assembly of the body of the 30S subunit. In terms of biological role, with S5 and S12 plays an important role in translational accuracy. The polypeptide is Small ribosomal subunit protein uS4c (rps4) (Equisetum palustre (Marsh horsetail)).